The sequence spans 102 residues: Small ribosomal subunit protein uS10 (102 aa).

The protein belongs to the universal ribosomal protein uS10 family. As to quaternary structure, part of the 30S ribosomal subunit.

Functionally, involved in the binding of tRNA to the ribosomes. In Pyrococcus horikoshii (strain ATCC 700860 / DSM 12428 / JCM 9974 / NBRC 100139 / OT-3), this protein is Small ribosomal subunit protein uS10.